Here is a 138-residue protein sequence, read N- to C-terminus: MSNSIEQQQTPEVPPLKYGEREIAKGELFTFPNPRIGRHYQIHITLPEFTCKCPFSGYPDFATIYLTYVPNEKVVELKAIKLYINNYRDLYISHEEAVNQILDDFVAACDPLEVQIKGDYNPRGNVHTVIEVNYQKAN.

Cysteine 53 acts as the Thioimide intermediate in catalysis. Aspartate 60 acts as the Proton donor in catalysis. Substrate contacts are provided by residues 75-77 and 94-95; these read VEL and HE.

It belongs to the GTP cyclohydrolase I family. QueF type 1 subfamily.

The protein localises to the cytoplasm. It carries out the reaction 7-aminomethyl-7-carbaguanine + 2 NADP(+) = 7-cyano-7-deazaguanine + 2 NADPH + 3 H(+). Its pathway is tRNA modification; tRNA-queuosine biosynthesis. In terms of biological role, catalyzes the NADPH-dependent reduction of 7-cyano-7-deazaguanine (preQ0) to 7-aminomethyl-7-deazaguanine (preQ1). The polypeptide is NADPH-dependent 7-cyano-7-deazaguanine reductase (Gloeothece citriformis (strain PCC 7424) (Cyanothece sp. (strain PCC 7424))).